The chain runs to 557 residues: CCR4-NOT transcription complex subunit 6 (557 aa).

LRR repeat units follow at residues 52-73 (HLTALHLSDNSLSCIPSDIAKL), 75-96 (NLVYLDLSHNQIQSLPAELGNM), 98-120 (SLRELHLNYNQLRVLPFELGKLF), and 121-143 (QLQTLSLKGNPLTQDILNLCLEP). A nuclease domain region spans residues 153 to 557 (LLDNLSGTAK…VNGIHLPGRR (405 aa)). Glu-240 is a binding site for Mg(2+). Substrate contacts are provided by Glu-240, Glu-276, His-361, and Pro-366. Asp-412 contributes to the Mg(2+) binding site. The active-site Proton donor/acceptor is the Asp-412. Substrate is bound by residues Asn-414, Asn-481, and Phe-486.

It belongs to the CCR4/nocturin family. Component of the CCR4-NOT complex; distinct complexes seem to exist that differ in the participation of probably mutually exclusive catalytic subunits; the complex contains two deadenylase subunits, CNOT6 or CNOT6L, and CNOT7 or CNOT8. Interacts with CNOT7 and CNOT8. Interacts with UNR. Interacts with ZFP36L1 (via N-terminus). Interacts with ZNF335. Requires Mg(2+) as cofactor.

The protein localises to the cytoplasm. It localises to the nucleus. It carries out the reaction Exonucleolytic cleavage of poly(A) to 5'-AMP.. Its function is as follows. Poly(A) nuclease with 3'-5' RNase activity. Catalytic component of the CCR4-NOT complex which is one of the major cellular mRNA deadenylases and is linked to various cellular processes including bulk mRNA degradation, miRNA-mediated repression, translational repression during translational initiation and general transcription regulation. Additional complex functions may be a consequence of its influence on mRNA expression. Involved in mRNA decay mediated by the major-protein-coding determinant of instability (mCRD) of the FOS gene in the cytoplasm. In the presence of ZNF335, enhances ligand-dependent transcriptional activity of nuclear hormone receptors. Mediates cell proliferation and cell survival and prevents cellular senescence. The protein is CCR4-NOT transcription complex subunit 6 (Cnot6) of Mus musculus (Mouse).